A 655-amino-acid chain; its full sequence is Peroxidase skpo-1 (655 aa).

Positions 1–19 are cleaved as a signal peptide; the sequence is MKSLLFSILLIYLIQLVRS. The ShKT domain occupies 22–56; the sequence is CTDKHIHCFFWSQEGECEVNPRWMKKHCQKACGTC. 4 disulfides stabilise this stretch: Cys22–Cys56, Cys29–Cys49, Cys38–Cys53, and Cys133–Cys150. The Proton acceptor role is filled by His222. His428 lines the heme b pocket. Cystine bridges form between Cys520–Cys576 and Cys617–Cys642.

The protein belongs to the peroxidase family. XPO subfamily. Heme b is required as a cofactor. In terms of tissue distribution, exclusively expressed in hypodermis.

The enzyme catalyses 2 a phenolic donor + H2O2 = 2 a phenolic radical donor + 2 H2O. Functionally, involved in hypodermal immune response against some types of bacterial infection. Probably utilizes H(2)O(2) produced by the NADPH oxidase bli-3. May play a role in cuticule biosynthesis. In Caenorhabditis elegans, this protein is Peroxidase skpo-1.